A 286-amino-acid chain; its full sequence is Small ribosomal subunit protein uS2 (286 aa).

Positions 231-286 (ERAQAEAKAAAGDNDAPVSSEGESTEVASDAASTASETTATSSDESAAESSEAESK) are disordered. Residues 255–280 (TEVASDAASTASETTATSSDESAAES) show a composition bias toward low complexity.

This sequence belongs to the universal ribosomal protein uS2 family.

The polypeptide is Small ribosomal subunit protein uS2 (Corynebacterium kroppenstedtii (strain DSM 44385 / JCM 11950 / CIP 105744 / CCUG 35717)).